The following is a 261-amino-acid chain: uncharacterized protein (261 aa).

A signal peptide spans 1–22 (MIHSKKLTLGICLVLLIILIGG). A lipid anchor (N-palmitoyl cysteine) is attached at cysteine 23. A lipid anchor (S-diacylglycerol cysteine) is attached at cysteine 23.

The protein belongs to the staphylococcal tandem lipoprotein family.

It is found in the cell membrane. This is an uncharacterized protein from Staphylococcus aureus (strain NCTC 8325 / PS 47).